Here is a 72-residue protein sequence, read N- to C-terminus: Translation initiation factor IF-1 (72 aa).

One can recognise an S1-like domain in the interval 1-72 (MAKDDVIEIE…TKGRITYRFK (72 aa)).

This sequence belongs to the IF-1 family. In terms of assembly, component of the 30S ribosomal translation pre-initiation complex which assembles on the 30S ribosome in the order IF-2 and IF-3, IF-1 and N-formylmethionyl-tRNA(fMet); mRNA recruitment can occur at any time during PIC assembly.

The protein localises to the cytoplasm. One of the essential components for the initiation of protein synthesis. Stabilizes the binding of IF-2 and IF-3 on the 30S subunit to which N-formylmethionyl-tRNA(fMet) subsequently binds. Helps modulate mRNA selection, yielding the 30S pre-initiation complex (PIC). Upon addition of the 50S ribosomal subunit IF-1, IF-2 and IF-3 are released leaving the mature 70S translation initiation complex. The polypeptide is Translation initiation factor IF-1 (Latilactobacillus sakei subsp. sakei (strain 23K) (Lactobacillus sakei subsp. sakei)).